The chain runs to 359 residues: MSVLTVNLGENSYDILIDGGTLPSLGRHCLERGLSGRVAVISNPAVAELYAEQVRASLVESGNQVTLILIPEGEEHKNAATLNLVYDQLIQAGLDRNSYIVALGGGVVGDLAGFAAATFLRGIPFVQVPTTLLAQVDSSVGGKTAIDHPRGKNLIGAFYQPRLVLIDVETLTTLPQREFRAGLAEVIKYGVAMDLAFYELLERDSGRILEMDADCLERIVLRCCELKARVVEQDEKESGLRAILNYGHTLGHAIETLAGYGTLVHGEAVAIGMVLAARISLAGGYCSEGDVSRIVALLGRFGLPCIPPRIDQGRLAETLLTDKKSRSGIIRFICNRGIGDCVVVNLTAEQLLTLSGLEV.

Residues 72 to 77 (EGEEHK), 106 to 110 (GVVGD), 130 to 131 (TT), lysine 143, lysine 152, and 170 to 173 (TLTT) contribute to the NAD(+) site. Glutamate 185, histidine 248, and histidine 265 together coordinate Zn(2+).

This sequence belongs to the sugar phosphate cyclases superfamily. Dehydroquinate synthase family. Co(2+) serves as cofactor. Zn(2+) is required as a cofactor. Requires NAD(+) as cofactor.

Its subcellular location is the cytoplasm. It carries out the reaction 7-phospho-2-dehydro-3-deoxy-D-arabino-heptonate = 3-dehydroquinate + phosphate. The protein operates within metabolic intermediate biosynthesis; chorismate biosynthesis; chorismate from D-erythrose 4-phosphate and phosphoenolpyruvate: step 2/7. Catalyzes the conversion of 3-deoxy-D-arabino-heptulosonate 7-phosphate (DAHP) to dehydroquinate (DHQ). This Pelobacter propionicus (strain DSM 2379 / NBRC 103807 / OttBd1) protein is 3-dehydroquinate synthase.